The following is an 82-amino-acid chain: ATP synthase subunit c, chloroplastic (82 aa).

The next 2 helical transmembrane spans lie at 3–23 (PIVA…AAIG) and 57–77 (FAFM…LLFA).

This sequence belongs to the ATPase C chain family. As to quaternary structure, F-type ATPases have 2 components, F(1) - the catalytic core - and F(0) - the membrane proton channel. F(1) has five subunits: alpha(3), beta(3), gamma(1), delta(1), epsilon(1). F(0) has four main subunits: a(1), b(1), b'(1) and c(10-14). The alpha and beta chains form an alternating ring which encloses part of the gamma chain. F(1) is attached to F(0) by a central stalk formed by the gamma and epsilon chains, while a peripheral stalk is formed by the delta, b and b' chains.

The protein resides in the plastid. Its subcellular location is the chloroplast thylakoid membrane. Its function is as follows. F(1)F(0) ATP synthase produces ATP from ADP in the presence of a proton or sodium gradient. F-type ATPases consist of two structural domains, F(1) containing the extramembraneous catalytic core and F(0) containing the membrane proton channel, linked together by a central stalk and a peripheral stalk. During catalysis, ATP synthesis in the catalytic domain of F(1) is coupled via a rotary mechanism of the central stalk subunits to proton translocation. In terms of biological role, key component of the F(0) channel; it plays a direct role in translocation across the membrane. A homomeric c-ring of between 10-14 subunits forms the central stalk rotor element with the F(1) delta and epsilon subunits. The polypeptide is ATP synthase subunit c, chloroplastic (Chlorella vulgaris (Green alga)).